Here is a 56-residue protein sequence, read N- to C-terminus: Small ribosomal subunit protein uS14 (56 aa).

Belongs to the universal ribosomal protein uS14 family.

The polypeptide is Small ribosomal subunit protein uS14 (RPS29) (Kluyveromyces lactis (strain ATCC 8585 / CBS 2359 / DSM 70799 / NBRC 1267 / NRRL Y-1140 / WM37) (Yeast)).